Here is a 181-residue protein sequence, read N- to C-terminus: Protein Syd (181 aa).

The protein belongs to the Syd family.

Its subcellular location is the cell inner membrane. Its function is as follows. Interacts with the SecY protein in vivo. May bind preferentially to an uncomplexed state of SecY, thus functioning either as a chelating agent for excess SecY in the cell or as a regulatory factor that negatively controls the translocase function. The protein is Protein Syd of Escherichia coli O157:H7.